Here is a 301-residue protein sequence, read N- to C-terminus: 2-methylisocitrate lyase (301 aa).

Position 53–55 (53–55 (SGA)) interacts with substrate. Residues Asp-92 and Asp-94 each coordinate Mg(2+). Substrate contacts are provided by residues 129 to 130 (CG), Arg-162, Glu-192, 214 to 216 (NMT), Arg-245, and Arg-274.

Belongs to the isocitrate lyase/PEP mutase superfamily. Methylisocitrate lyase family. Requires Mg(2+) as cofactor.

It carries out the reaction 3-hydroxybutane-1,2,3-tricarboxylate = pyruvate + succinate. In terms of biological role, involved in the methylcitric acid cycle. Catalyzes the cleavage of 2-methylisocitrate to yield pyruvate and succinate. In Bacillus subtilis (strain 168), this protein is 2-methylisocitrate lyase.